The chain runs to 326 residues: Meiotically up-regulated gene 113 protein (326 aa).

The protein resides in the cytoplasm. Functionally, has a role in meiosis. The sequence is that of Meiotically up-regulated gene 113 protein (mug113) from Schizosaccharomyces pombe (strain 972 / ATCC 24843) (Fission yeast).